The primary structure comprises 434 residues: Serine/threonine transporter SstT (434 aa).

The next 9 membrane-spanning stretches (helical) occupy residues 14–34, 41–61, 72–92, 135–155, 172–192, 210–230, 282–302, 316–336, and 351–371; these read IVIGIIVGAVLGVMVPSWSFI, FVGALKAIAPLLVFLLIMSAI, FGTVIVLYLSATLFSSIAAVA, ALVEGNYLAILFWSLLIGSGL, TVSAVAQNVIQFAPFGIVGLL, LLMLLVATMVFVYLVVYPFMV, ISIPLGGSANSGGAAITVSIM, IFLALLLCFLSAISATGVSGI, and FGISNDIAMQVVGIGFIIGVV. Residues 413-434 form a disordered region; it reads GKGTAEVVTPEKTNEAEESEQV.

Belongs to the dicarboxylate/amino acid:cation symporter (DAACS) (TC 2.A.23) family.

The protein resides in the cell membrane. It carries out the reaction L-serine(in) + Na(+)(in) = L-serine(out) + Na(+)(out). It catalyses the reaction L-threonine(in) + Na(+)(in) = L-threonine(out) + Na(+)(out). Functionally, involved in the import of serine and threonine into the cell, with the concomitant import of sodium (symport system). The polypeptide is Serine/threonine transporter SstT (Lacticaseibacillus casei (strain BL23) (Lactobacillus casei)).